The chain runs to 290 residues: Glycine--tRNA ligase alpha subunit (290 aa).

Belongs to the class-II aminoacyl-tRNA synthetase family. As to quaternary structure, tetramer of two alpha and two beta subunits.

It is found in the cytoplasm. The enzyme catalyses tRNA(Gly) + glycine + ATP = glycyl-tRNA(Gly) + AMP + diphosphate. The protein is Glycine--tRNA ligase alpha subunit of Syntrophobacter fumaroxidans (strain DSM 10017 / MPOB).